Reading from the N-terminus, the 556-residue chain is Formate--tetrahydrofolate ligase (556 aa).

64 to 71 (TPAGEGKT) is a binding site for ATP.

The protein belongs to the formate--tetrahydrofolate ligase family.

It catalyses the reaction (6S)-5,6,7,8-tetrahydrofolate + formate + ATP = (6R)-10-formyltetrahydrofolate + ADP + phosphate. The protein operates within one-carbon metabolism; tetrahydrofolate interconversion. This is Formate--tetrahydrofolate ligase from Actinobacillus pleuropneumoniae serotype 5b (strain L20).